The sequence spans 119 residues: MVQENKNFATAQAKSIRVSSRKLNLVAAFIRNMKVSEALVQLTFSPKRIAKVVKDCLQSAVANAENNLGLDIDRLVITKAIVGKALVMKRVMPRAKGRATRINKFFSNLYITVTEKEDN.

It belongs to the universal ribosomal protein uL22 family. Part of the 50S ribosomal subunit.

In terms of biological role, this protein binds specifically to 23S rRNA; its binding is stimulated by other ribosomal proteins, e.g. L4, L17, and L20. It is important during the early stages of 50S assembly. It makes multiple contacts with different domains of the 23S rRNA in the assembled 50S subunit and ribosome. Functionally, the globular domain of the protein is located near the polypeptide exit tunnel on the outside of the subunit, while an extended beta-hairpin is found that lines the wall of the exit tunnel in the center of the 70S ribosome. The sequence is that of Large ribosomal subunit protein uL22 from Rickettsia peacockii (strain Rustic).